Here is an 837-residue protein sequence, read N- to C-terminus: Vacuolar membrane protease (837 aa).

Topologically, residues 1-36 are cytoplasmic; sequence MSEEEVHDTSSEASEVFTNQPNAFVRGVRSIFGYRK. A helical transmembrane segment spans residues 37–57; the sequence is TSLTLFVILTIVVTAGLSFYD. Over 58–355 the chain is Vacuolar; sequence NSLELTIELP…FATPISALAR (298 aa). N-linked (GlcNAc...) asparagine glycosylation occurs at asparagine 143. Positions 157 and 169 each coordinate Zn(2+). The active-site Proton acceptor is glutamate 201. Glutamate 202, glutamate 227, and histidine 299 together coordinate Zn(2+). A helical transmembrane segment spans residues 356 to 376; that stretch reads VNLVLLVLFPVVSTPLLFVIV. Residues 377-384 lie on the Cytoplasmic side of the membrane; the sequence is KYKKWKLR. A helical transmembrane segment spans residues 385–405; that stretch reads VTNFLGVPLAMGLAVAVGQVG. Residues 406-415 are Vacuolar-facing; it reads NPMLVSSHPM. A helical transmembrane segment spans residues 416 to 436; sequence MVVATTTSIVVLVYYVVLNGV. Residues 437–446 are Cytoplasmic-facing; that stretch reads DWVNTSSDQK. The chain crosses the membrane as a helical span at residues 447-467; that stretch reads LVTMIEVSFVYWVVLVYVTWS. Residues 468–474 are Vacuolar-facing; sequence GGDHTGE. The chain crosses the membrane as a helical span at residues 475–495; the sequence is FGVTVLFFVQASTSLLGLIGW. The Cytoplasmic portion of the chain corresponds to 496–539; it reads TFTRVRGGDEPLLSGEEERYGTEDERDTEKPLVEHNYDWSLQYL. A helical transmembrane segment spans residues 540–560; the sequence is LIVPVSSLVVYNSGWLVLEGV. N-linked (GlcNAc...) asparagine glycosylation occurs at asparagine 561. At 561–572 the chain is on the vacuolar side; the sequence is NKTVQESLASEH. Residues 573-593 traverse the membrane as a helical segment; it reads LIYWIVVVFSQFLVLPVVPFI. Residues 594 to 598 lie on the Cytoplasmic side of the membrane; sequence TKFNR. A helical membrane pass occupies residues 599–619; the sequence is YIVLGLSVVVVVGVLMSMAVH. Topologically, residues 620-837 are vacuolar; that stretch reads PFNQGSPMKL…LVGVVKHVDV (218 aa). N-linked (GlcNAc...) asparagine glycosylation is present at asparagine 689.

The protein belongs to the peptidase M28 family. It depends on Zn(2+) as a cofactor.

The protein localises to the vacuole membrane. May be involved in vacuolar sorting and osmoregulation. The protein is Vacuolar membrane protease of Candida albicans (strain SC5314 / ATCC MYA-2876) (Yeast).